We begin with the raw amino-acid sequence, 345 residues long: Protein URE2 (345 aa).

Polar residues predominate over residues 22–36; that stretch reads GNRNSNTTTDQSNIN. The interval 22–66 is disordered; it reads GNRNSNTTTDQSNINFEFPSGVNSNNSVQNSNNGRNGTQNNNNEN. Over residues 41-66 the composition is skewed to low complexity; it reads SGVNSNNSVQNSNNGRNGTQNNNNEN. The GST N-terminal domain maps to 103 to 187; it reads EGYTLFSHRS…HLVNKYYKET (85 aa). The GST C-terminal domain occupies 196-345; that stretch reads DLADQSQINA…PAVIKALRGE (150 aa).

This sequence belongs to the GST superfamily. Homodimer.

Functionally, plays an important role in the cellular response to the nitrogen source. URE2 gene plays a major part in the repression of GLN1 and GDH2 genes by glutamine, and is required for the inactivation of glutamine synthetase. URE2 gene product may catalytically inactivate GLN3 in response to an increase in the intracellular concentration of glutamine. This is Protein URE2 (URE2) from Saccharomyces bayanus (Yeast).